The primary structure comprises 227 residues: Endolytic peptidoglycan transglycosylase RlpA (227 aa).

An N-terminal signal peptide occupies residues 1–21 (MMNHKFVLLILLIFYCFFLSG). A lipid anchor (N-palmitoyl cysteine) is attached at Cys-22. Cys-22 is lipidated: S-diacylglycerol cysteine.

It belongs to the RlpA family.

It is found in the cell membrane. In terms of biological role, lytic transglycosylase with a strong preference for naked glycan strands that lack stem peptides. This Rickettsia bellii (strain RML369-C) protein is Endolytic peptidoglycan transglycosylase RlpA.